Reading from the N-terminus, the 132-residue chain is Transcription antitermination protein NusB (132 aa).

It belongs to the NusB family.

Its function is as follows. Involved in transcription antitermination. Required for transcription of ribosomal RNA (rRNA) genes. Binds specifically to the boxA antiterminator sequence of the ribosomal RNA (rrn) operons. The protein is Transcription antitermination protein NusB of Campylobacter jejuni subsp. jejuni serotype O:2 (strain ATCC 700819 / NCTC 11168).